Here is a 133-residue protein sequence, read N- to C-terminus: ATP synthase epsilon chain, sodium ion specific (133 aa).

The protein belongs to the ATPase epsilon chain family. In terms of assembly, F-type ATPases have 2 components, CF(1) - the catalytic core - and CF(0) - the membrane proton channel. CF(1) has five subunits: alpha(3), beta(3), gamma(1), delta(1), epsilon(1). CF(0) has three main subunits: a, b and c.

It is found in the cell membrane. Inhibited by nitrate. In terms of biological role, produces ATP from ADP in the presence of a sodium gradient across the membrane. The chain is ATP synthase epsilon chain, sodium ion specific (atpC) from Acetobacterium woodii (strain ATCC 29683 / DSM 1030 / JCM 2381 / KCTC 1655 / WB1).